A 441-amino-acid polypeptide reads, in one-letter code: Arginine biosynthesis bifunctional protein ArgJ, mitochondrial (441 aa).

The transit peptide at 1 to 8 (MRISSTLL) directs the protein to the mitochondrion. The substrate site is built by threonine 177, lysine 204, threonine 215, glutamate 301, asparagine 436, and serine 441. The active-site Nucleophile is threonine 215.

The protein belongs to the ArgJ family. Heterodimer of an alpha and a beta chain. Post-translationally, the alpha and beta chains are autoproteolytically processed from a single precursor protein within the mitochondrion.

It is found in the mitochondrion matrix. It carries out the reaction N(2)-acetyl-L-ornithine + L-glutamate = N-acetyl-L-glutamate + L-ornithine. The catalysed reaction is L-glutamate + acetyl-CoA = N-acetyl-L-glutamate + CoA + H(+). The protein operates within amino-acid biosynthesis; L-arginine biosynthesis; L-ornithine and N-acetyl-L-glutamate from L-glutamate and N(2)-acetyl-L-ornithine (cyclic): step 1/1. It participates in amino-acid biosynthesis; L-arginine biosynthesis; N(2)-acetyl-L-ornithine from L-glutamate: step 1/4. In terms of biological role, catalyzes two activities which are involved in the cyclic version of arginine biosynthesis: the synthesis of acetylglutamate from glutamate and acetyl-CoA, and of ornithine by transacetylation between acetylornithine and glutamate. This chain is Arginine biosynthesis bifunctional protein ArgJ, mitochondrial, found in Saccharomyces cerevisiae (strain Lalvin EC1118 / Prise de mousse) (Baker's yeast).